A 253-amino-acid chain; its full sequence is Octanoyltransferase (253 aa).

A BPL/LPL catalytic domain is found at 47 to 236; the sequence is PETPDQVWLV…ALCEVLAARE (190 aa). Substrate contacts are provided by residues 87–94, 159–161, and 172–174; these read RGGQITYH, ALG, and GVS. The active-site Acyl-thioester intermediate is the Cys-190.

This sequence belongs to the LipB family.

It localises to the cytoplasm. The catalysed reaction is octanoyl-[ACP] + L-lysyl-[protein] = N(6)-octanoyl-L-lysyl-[protein] + holo-[ACP] + H(+). Its pathway is protein modification; protein lipoylation via endogenous pathway; protein N(6)-(lipoyl)lysine from octanoyl-[acyl-carrier-protein]: step 1/2. Functionally, catalyzes the transfer of endogenously produced octanoic acid from octanoyl-acyl-carrier-protein onto the lipoyl domains of lipoate-dependent enzymes. Lipoyl-ACP can also act as a substrate although octanoyl-ACP is likely to be the physiological substrate. This is Octanoyltransferase from Cupriavidus pinatubonensis (strain JMP 134 / LMG 1197) (Cupriavidus necator (strain JMP 134)).